Consider the following 1017-residue polypeptide: Protein translocase subunit SecA 1 (1017 aa).

ATP contacts are provided by residues Gln-143, 161-165, and Asp-661; that span reads GEGKT. The tract at residues 978–999 is disordered; the sequence is GLNDDDEPLPAQPITTEQKPGR. Residues Cys-1003, Cys-1005, Cys-1014, and Cys-1015 each coordinate Zn(2+).

It belongs to the SecA family. In terms of assembly, monomer and homodimer. Part of the essential Sec protein translocation apparatus which comprises SecA, SecYEG and auxiliary proteins SecDF. Other proteins may also be involved. It depends on Zn(2+) as a cofactor.

Its subcellular location is the cell inner membrane. The protein resides in the cytoplasm. The catalysed reaction is ATP + H2O + cellular proteinSide 1 = ADP + phosphate + cellular proteinSide 2.. Its function is as follows. Part of the Sec protein translocase complex. Interacts with the SecYEG preprotein conducting channel. Has a central role in coupling the hydrolysis of ATP to the transfer of proteins into and across the cell membrane, serving as an ATP-driven molecular motor driving the stepwise translocation of polypeptide chains across the membrane. The chain is Protein translocase subunit SecA 1 from Chlorobium chlorochromatii (strain CaD3).